The primary structure comprises 316 residues: Taste receptor type 2 member 109 (316 aa).

The Extracellular segment spans residues methionine 1 to asparagine 14. The chain crosses the membrane as a helical span at residues isoleucine 15–alanine 35. Residues leucine 36–arginine 62 are Cytoplasmic-facing. Residues isoleucine 63 to valine 83 traverse the membrane as a helical segment. At threonine 84–threonine 94 the chain is on the extracellular side. The chain crosses the membrane as a helical span at residues leucine 95–phenylalanine 115. Residues leucine 116–lysine 135 are Cytoplasmic-facing. The chain crosses the membrane as a helical span at residues valine 136–asparagine 156. At leucine 157–histidine 191 the chain is on the extracellular side. An N-linked (GlcNAc...) asparagine glycan is attached at asparagine 170. A helical membrane pass occupies residues isoleucine 192–serine 212. Residues leucine 213–alanine 241 are Cytoplasmic-facing. Residues valine 242–isoleucine 262 traverse the membrane as a helical segment. Over histidine 263–proline 270 the chain is Extracellular. Residues phenylalanine 271–isoleucine 291 traverse the membrane as a helical segment. The Cytoplasmic portion of the chain corresponds to leucine 292–lysine 316.

It belongs to the G-protein coupled receptor T2R family.

The protein localises to the membrane. Functionally, putative taste receptor which may play a role in the perception of bitterness. This Mus musculus (Mouse) protein is Taste receptor type 2 member 109.